The following is a 1194-amino-acid chain: Chitin synthase C (1194 aa).

Disordered regions lie at residues 1-91 (MSLP…PNYL) and 136-177 (GAHG…RRKA). Positions 12-23 (PRREETSAFREP) are enriched in basic and acidic residues. Basic residues predominate over residues 42-54 (PRHHRHHRSHSSR). Basic and acidic residues-rich tracts occupy residues 55-69 (HQHDIDEERAEEGGI) and 76-85 (VKPERGRMDP). A compositionally biased stretch (basic residues) spans 150–164 (TRHRSKKRKGSRKIS). The chain crosses the membrane as a helical span at residues 221 to 241 (IGLISIILMIAAFVGFLTFGF). Residues Asn351 and Asn390 are each glycosylated (N-linked (GlcNAc...) asparagine). A helical transmembrane segment spans residues 476–496 (YVSLIFILSIVIVKFAFALLF). Asn582, Asn608, Asn885, and Asn1014 each carry an N-linked (GlcNAc...) asparagine glycan. Helical transmembrane passes span 1039–1059 (FVIFVELVGTVVLPAAISFTI), 1073–1093 (IIPLVLLALILGLPGVLVVVT), and 1097–1117 (LVYVLWMLVYLISLPIWNFVL).

Belongs to the chitin synthase family. Class V subfamily.

It localises to the cell membrane. It carries out the reaction [(1-&gt;4)-N-acetyl-beta-D-glucosaminyl](n) + UDP-N-acetyl-alpha-D-glucosamine = [(1-&gt;4)-N-acetyl-beta-D-glucosaminyl](n+1) + UDP + H(+). Functionally, polymerizes chitin, a structural polymer of the cell wall and septum, by transferring the sugar moiety of UDP-GlcNAc to the non-reducing end of the growing chitin polymer. Responsible for synthesis of 30-40% of the chitin in the cells. ChsA and chsD play redundant functions in conidia formation. The chitin synthesized by the chsD-encoded isozyme contributes to the rigidity of the walls of germinating conidia, of the subapical region of hyphae, and of conidiophore vesicles, but is not necessary for normal morphology of these cells. The protein is Chitin synthase C of Emericella nidulans (strain FGSC A4 / ATCC 38163 / CBS 112.46 / NRRL 194 / M139) (Aspergillus nidulans).